Consider the following 352-residue polypeptide: Dof zinc finger protein DOF1.8 (352 aa).

The disordered stretch occupies residues 24-46 (LKQQSNPPSPATPVERKARPEKD). Basic and acidic residues predominate over residues 37–46 (VERKARPEKD). The Dof-type zinc-finger motif lies at 49 to 103 (LNCPRCNSLNTKFCYYNNYSLTQPRYFCKDCRRYWTAGGSLRNIPVGGGVRKNKR). The Zn(2+) site is built by Cys51, Cys54, Cys76, and Cys79. Disordered regions lie at residues 93–136 (PVGG…PLPH) and 265–334 (GGDP…VGFW). Residues 104-129 (SSSNSSSSSPSSSSSSKKPLFANNNT) show a composition bias toward low complexity. Over residues 310–323 (ENNDEHSDHEHEKE) the composition is skewed to basic and acidic residues.

The protein localises to the nucleus. Functionally, transcription factor that binds specifically to a 5'-AA[AG]G-3' consensus core sequence. In Arabidopsis thaliana (Mouse-ear cress), this protein is Dof zinc finger protein DOF1.8 (DOF1.8).